We begin with the raw amino-acid sequence, 141 residues long: Hemoglobin subunit alpha (141 aa).

In terms of domain architecture, Globin spans 1–141 (VLSSKDKANV…VSTVLTSKYR (141 aa)). Position 3 is a phosphoserine (Ser-3). 2 positions are modified to N6-succinyllysine: Lys-7 and Lys-11. Position 16 is an N6-acetyllysine; alternate (Lys-16). Lys-16 carries the post-translational modification N6-succinyllysine; alternate. Tyr-24 carries the phosphotyrosine modification. Lys-40 carries the post-translational modification N6-succinyllysine. Ser-49 carries the post-translational modification Phosphoserine. Position 58 (His-58) interacts with O2. Position 87 (His-87) interacts with heme b. A Phosphoserine modification is found at Ser-102. Thr-108 carries the post-translational modification Phosphothreonine. Position 124 is a phosphoserine (Ser-124). Phosphothreonine is present on residues Thr-134 and Thr-137. Phosphoserine is present on Ser-138.

Belongs to the globin family. Heterotetramer of two alpha chains and two beta chains. As to expression, red blood cells.

Its function is as follows. Involved in oxygen transport from the lung to the various peripheral tissues. Hemopressin acts as an antagonist peptide of the cannabinoid receptor CNR1. Hemopressin-binding efficiently blocks cannabinoid receptor CNR1 and subsequent signaling. The protein is Hemoglobin subunit alpha (HBA) of Lama vicugna (Vicugna).